The sequence spans 257 residues: Thiazole synthase (257 aa).

Lys96 (schiff-base intermediate with DXP) is an active-site residue. 1-deoxy-D-xylulose 5-phosphate is bound by residues Gly157, 184 to 185, and 206 to 207; these read AG and NT.

This sequence belongs to the ThiG family. As to quaternary structure, homotetramer. Forms heterodimers with either ThiH or ThiS.

It localises to the cytoplasm. The catalysed reaction is [ThiS sulfur-carrier protein]-C-terminal-Gly-aminoethanethioate + 2-iminoacetate + 1-deoxy-D-xylulose 5-phosphate = [ThiS sulfur-carrier protein]-C-terminal Gly-Gly + 2-[(2R,5Z)-2-carboxy-4-methylthiazol-5(2H)-ylidene]ethyl phosphate + 2 H2O + H(+). It functions in the pathway cofactor biosynthesis; thiamine diphosphate biosynthesis. Its function is as follows. Catalyzes the rearrangement of 1-deoxy-D-xylulose 5-phosphate (DXP) to produce the thiazole phosphate moiety of thiamine. Sulfur is provided by the thiocarboxylate moiety of the carrier protein ThiS. In vitro, sulfur can be provided by H(2)S. The sequence is that of Thiazole synthase from Agrobacterium fabrum (strain C58 / ATCC 33970) (Agrobacterium tumefaciens (strain C58)).